The sequence spans 241 residues: Cobalt transport protein CbiM (241 aa).

The N-terminal stretch at 1–24 is a signal peptide; that stretch reads MKKIKIISFSVAYLILLTPIYASA. 6 helical membrane-spanning segments follow: residues 30–50, 67–87, 99–119, 131–151, 160–180, and 202–222; these read GFLPPLWAAIWSVISLPFIVG, LLLGLVGAFVFVLSALKLPSV, LGTIIFGPLPMAVIGLIVLIF, TLGANVFSMAIVGPFAGYFIF, SLAVFLAAMLADLITYIVTSL, and GIFAITQIPLAIGEGILTLIV.

This sequence belongs to the CbiM family. Forms an energy-coupling factor (ECF) transporter complex composed of an ATP-binding protein (A component, CbiO), a transmembrane protein (T component, CbiQ) and 2 possible substrate-capture proteins (S components, CbiM and CbiN) of unknown stoichimetry.

It localises to the cell membrane. The protein operates within cofactor biosynthesis; adenosylcobalamin biosynthesis. Its function is as follows. Part of the energy-coupling factor (ECF) transporter complex CbiMNOQ involved in cobalt import. The sequence is that of Cobalt transport protein CbiM from Acetoanaerobium sticklandii (strain ATCC 12662 / DSM 519 / JCM 1433 / CCUG 9281 / NCIMB 10654 / HF) (Clostridium sticklandii).